The primary structure comprises 89 residues: MSLDTTEKQQLINANQTHGTDTGSVEVQVAMLSERITKLSSHLQENKHDFSSRQGLLKMIGRRKRLLSYVRGKSEQRYNGLITKLGIRG.

Residues 1–23 form a disordered region; the sequence is MSLDTTEKQQLINANQTHGTDTG. A compositionally biased stretch (polar residues) spans 8–23; sequence KQQLINANQTHGTDTG.

This sequence belongs to the universal ribosomal protein uS15 family. In terms of assembly, part of the 30S ribosomal subunit. Forms a bridge to the 50S subunit in the 70S ribosome, contacting the 23S rRNA.

Its function is as follows. One of the primary rRNA binding proteins, it binds directly to 16S rRNA where it helps nucleate assembly of the platform of the 30S subunit by binding and bridging several RNA helices of the 16S rRNA. In terms of biological role, forms an intersubunit bridge (bridge B4) with the 23S rRNA of the 50S subunit in the ribosome. This is Small ribosomal subunit protein uS15 from Prochlorococcus marinus (strain MIT 9313).